Here is a 270-residue protein sequence, read N- to C-terminus: MPELPEVETTLRGVSPHILGRKVTDLVIRQPRLRWPIPLELSEQLPGQQLKAASRRGKYLLLSFNTGTALIHLGMSGSLRIVKPEEPPLFHDHFDMHFGNRILRYCDPRRFGCLLWEAGDIHQHALLRDLGPEPLGDDFTPAYLYERSRKRTQAIKQFIMDSKIVVGVGNIYANESLFMAGIKPIRKAGALSRHMCEDLVRDIRFVLQRSITQGGTTLRDFVGGDGKPGYFQQQLLVYGRGGEACKTCQKPLKEIRMNDRTTVYCVTCQQ.

Catalysis depends on Pro2, which acts as the Schiff-base intermediate with DNA. Catalysis depends on Glu3, which acts as the Proton donor. Lys58 acts as the Proton donor; for beta-elimination activity in catalysis. DNA is bound by residues His91, Arg109, and Arg151. The FPG-type zinc finger occupies 236-270; that stretch reads LVYGRGGEACKTCQKPLKEIRMNDRTTVYCVTCQQ. Catalysis depends on Arg260, which acts as the Proton donor; for delta-elimination activity.

It belongs to the FPG family. Monomer. It depends on Zn(2+) as a cofactor.

It carries out the reaction Hydrolysis of DNA containing ring-opened 7-methylguanine residues, releasing 2,6-diamino-4-hydroxy-5-(N-methyl)formamidopyrimidine.. The catalysed reaction is 2'-deoxyribonucleotide-(2'-deoxyribose 5'-phosphate)-2'-deoxyribonucleotide-DNA = a 3'-end 2'-deoxyribonucleotide-(2,3-dehydro-2,3-deoxyribose 5'-phosphate)-DNA + a 5'-end 5'-phospho-2'-deoxyribonucleoside-DNA + H(+). Its function is as follows. Involved in base excision repair of DNA damaged by oxidation or by mutagenic agents. Acts as a DNA glycosylase that recognizes and removes damaged bases. Has a preference for oxidized purines, such as 7,8-dihydro-8-oxoguanine (8-oxoG). Has AP (apurinic/apyrimidinic) lyase activity and introduces nicks in the DNA strand. Cleaves the DNA backbone by beta-delta elimination to generate a single-strand break at the site of the removed base with both 3'- and 5'-phosphates. This chain is Formamidopyrimidine-DNA glycosylase, found in Cellvibrio japonicus (strain Ueda107) (Pseudomonas fluorescens subsp. cellulosa).